The primary structure comprises 272 residues: Type III pantothenate kinase (272 aa).

Position 6–13 (6–13 (NVNNTNTL)) interacts with ATP. A substrate-binding site is contributed by 113–116 (GADR). Asp-115 functions as the Proton acceptor in the catalytic mechanism. K(+) is bound at residue Asp-135. Position 138 (Thr-138) interacts with ATP. Thr-190 provides a ligand contact to substrate.

The protein belongs to the type III pantothenate kinase family. In terms of assembly, homodimer. Requires NH4(+) as cofactor. The cofactor is K(+).

It localises to the cytoplasm. The catalysed reaction is (R)-pantothenate + ATP = (R)-4'-phosphopantothenate + ADP + H(+). The protein operates within cofactor biosynthesis; coenzyme A biosynthesis; CoA from (R)-pantothenate: step 1/5. Catalyzes the phosphorylation of pantothenate (Pan), the first step in CoA biosynthesis. The protein is Type III pantothenate kinase of Acidobacterium capsulatum (strain ATCC 51196 / DSM 11244 / BCRC 80197 / JCM 7670 / NBRC 15755 / NCIMB 13165 / 161).